Reading from the N-terminus, the 197-residue chain is Guanylate kinase (197 aa).

Residues 6–191 (SKLIILSGPS…CVAQIEKIIS (186 aa)) enclose the Guanylate kinase-like domain. 13-20 (GPSGVGKG) lines the ATP pocket.

This sequence belongs to the guanylate kinase family.

It is found in the cytoplasm. The enzyme catalyses GMP + ATP = GDP + ADP. In terms of biological role, essential for recycling GMP and indirectly, cGMP. This Mesomycoplasma hyopneumoniae (strain 7448) (Mycoplasma hyopneumoniae) protein is Guanylate kinase.